Consider the following 197-residue polypeptide: Superoxide dismutase [Fe] (197 aa).

Fe cation is bound by residues His26, His75, Asp157, and His161.

Belongs to the iron/manganese superoxide dismutase family. As to quaternary structure, homotetramer. Fe cation is required as a cofactor.

The catalysed reaction is 2 superoxide + 2 H(+) = H2O2 + O2. Destroys superoxide anion radicals which are normally produced within the cells and which are toxic to biological systems. The sequence is that of Superoxide dismutase [Fe] from Cupriavidus metallidurans (strain ATCC 43123 / DSM 2839 / NBRC 102507 / CH34) (Ralstonia metallidurans).